The chain runs to 510 residues: ATP synthase subunit alpha (510 aa).

169 to 176 (GDRQTGKT) contributes to the ATP binding site.

Belongs to the ATPase alpha/beta chains family. In terms of assembly, F-type ATPases have 2 components, CF(1) - the catalytic core - and CF(0) - the membrane proton channel. CF(1) has five subunits: alpha(3), beta(3), gamma(1), delta(1), epsilon(1). CF(0) has three main subunits: a(1), b(2) and c(9-12). The alpha and beta chains form an alternating ring which encloses part of the gamma chain. CF(1) is attached to CF(0) by a central stalk formed by the gamma and epsilon chains, while a peripheral stalk is formed by the delta and b chains.

It localises to the cell inner membrane. The enzyme catalyses ATP + H2O + 4 H(+)(in) = ADP + phosphate + 5 H(+)(out). Its function is as follows. Produces ATP from ADP in the presence of a proton gradient across the membrane. The alpha chain is a regulatory subunit. The sequence is that of ATP synthase subunit alpha from Anaeromyxobacter dehalogenans (strain 2CP-C).